The sequence spans 435 residues: MRYVPHTKEEIKAMLEAVGLRNVDELFSDIPTEALLKRHLQVEGGWDEEQLRAYFRKAASSIPDANSAVYFLGGGVYDHYVPSAVDKIIALPEFYTAYTPYQAEISQGTLQAMFEYQSLICELTGMEVANGSLYDGASAVAEAVLMAMRINGKRRVLVSECVHPDIIEVLRTYQLGQDFEILTLPQKEGVTDLSELEDLSNVSCLVMQNPNYYGFLENMNQASELIHKAGGLFVAAVDPLSLGVLKSPHEYGADVVVGEGQSLGNHMSYGGPHFGFFATKMDYIRYMPGRMAGQTVDVDGRVGYVLTLQTREQHIRREKATSNITSNHWLMALASAVYLSLMGGSLPELGQTILNRSTYLAQKLASVGYPLWQRQYFFKEFPIKARDAEAVQEALADSGYYVGPVIDEHTLLVAVTEKRTKEHMDKLIELMEGLR.

It belongs to the GcvP family. N-terminal subunit subfamily. In terms of assembly, the glycine cleavage system is composed of four proteins: P, T, L and H. In this organism, the P 'protein' is a heterodimer of two subunits.

It carries out the reaction N(6)-[(R)-lipoyl]-L-lysyl-[glycine-cleavage complex H protein] + glycine + H(+) = N(6)-[(R)-S(8)-aminomethyldihydrolipoyl]-L-lysyl-[glycine-cleavage complex H protein] + CO2. In terms of biological role, the glycine cleavage system catalyzes the degradation of glycine. The P protein binds the alpha-amino group of glycine through its pyridoxal phosphate cofactor; CO(2) is released and the remaining methylamine moiety is then transferred to the lipoamide cofactor of the H protein. The sequence is that of Probable glycine dehydrogenase (decarboxylating) subunit 1 from Coprothermobacter proteolyticus (strain ATCC 35245 / DSM 5265 / OCM 4 / BT).